Here is a 196-residue protein sequence, read N- to C-terminus: Charged multivesicular body protein 1a (196 aa).

At Met1 the chain carries N-acetylmethionine. A coiled-coil region spans residues 5–47 (LFQLKFTAKQLEKLAKKAEKDSKAEQAKVKKALLQKNVECARV). Ser101 is subject to Phosphoserine. Positions 102-124 (TMDLQKVSSVMDRFEQQVQNLDV) form a coiled coil. Ser173 is subject to Phosphoserine. Residues 173–196 (SAVGESSVRSQEDQLSRRLAALRN) form a disordered region. An MIT-interacting motif motif is present at residues 185-195 (DQLSRRLAALR).

It belongs to the SNF7 family. In terms of assembly, probable peripherally associated component of the endosomal sorting required for transport complex III (ESCRT-III). ESCRT-III components are thought to multimerize to form a flat lattice on the perimeter membrane of the endosome. Several assembly forms of ESCRT-III may exist that interact and act sequentially. Self-associates. Interacts with CHMP1B. Interacts with VPS4A. Interacts with VPS4B. Interacts with PHF1. Interacts with IST1. Interacts with MITD1. Expressed in placenta, cultured skin fibroblasts and in osteoblast cell line MG-63.

The protein localises to the cytoplasm. Its subcellular location is the endosome membrane. It localises to the nucleus matrix. Probable peripherally associated component of the endosomal sorting required for transport complex III (ESCRT-III) which is involved in multivesicular bodies (MVBs) formation and sorting of endosomal cargo proteins into MVBs. MVBs contain intraluminal vesicles (ILVs) that are generated by invagination and scission from the limiting membrane of the endosome and mostly are delivered to lysosomes enabling degradation of membrane proteins, such as stimulated growth factor receptors, lysosomal enzymes and lipids. The MVB pathway appears to require the sequential function of ESCRT-O, -I,-II and -III complexes. ESCRT-III proteins mostly dissociate from the invaginating membrane before the ILV is released. The ESCRT machinery also functions in topologically equivalent membrane fission events, such as the terminal stages of cytokinesis and the budding of enveloped viruses (HIV-1 and other lentiviruses). ESCRT-III proteins are believed to mediate the necessary vesicle extrusion and/or membrane fission activities, possibly in conjunction with the AAA ATPase VPS4. Involved in cytokinesis. Involved in recruiting VPS4A and/or VPS4B to the midbody of dividing cells. May also be involved in chromosome condensation. Targets the Polycomb group (PcG) protein BMI1/PCGF4 to regions of condensed chromatin. May play a role in stable cell cycle progression and in PcG gene silencing. In Homo sapiens (Human), this protein is Charged multivesicular body protein 1a (CHMP1A).